A 1151-amino-acid polypeptide reads, in one-letter code: Protein BREAST CANCER SUSCEPTIBILITY 2 homolog A (1151 aa).

4 BRCA2 repeats span residues 63 to 97 (MPGE…EKVT), 116 to 150 (TAET…SDKI), 163 to 197 (FGVS…LEED), and 257 to 291 (LKVP…DPEL). Residues 408–427 (GFIPRGRQPGRPADQPLVDI) are disordered.

As to quaternary structure, interacts with RAD51 and DMC1. Interacts with DSS1(I). As to expression, expressed in flower buds.

In terms of biological role, involved in double-strand break repair and/or homologous recombination by mediating RAD51- and DMC1-facilitated DNA repair. Plays an essential role in both somatic and meiotic homologous recombination. Is crucial for the formation of RAD51 and DMC1 foci during male meiotic homologous recombination in prophase I. The chain is Protein BREAST CANCER SUSCEPTIBILITY 2 homolog A from Arabidopsis thaliana (Mouse-ear cress).